The primary structure comprises 360 residues: DNA replication and repair protein RecF (360 aa).

30 to 37 is an ATP binding site; the sequence is GQNGSGKT.

This sequence belongs to the RecF family.

Its subcellular location is the cytoplasm. Its function is as follows. The RecF protein is involved in DNA metabolism; it is required for DNA replication and normal SOS inducibility. RecF binds preferentially to single-stranded, linear DNA. It also seems to bind ATP. The polypeptide is DNA replication and repair protein RecF (Shewanella piezotolerans (strain WP3 / JCM 13877)).